A 436-amino-acid polypeptide reads, in one-letter code: UPF0597 protein YhaM (436 aa).

It belongs to the UPF0597 family.

The polypeptide is UPF0597 protein YhaM (Salmonella paratyphi B (strain ATCC BAA-1250 / SPB7)).